The primary structure comprises 454 residues: Bifunctional protein GlmU (454 aa).

The pyrophosphorylase stretch occupies residues Met1–Lys228. UDP-N-acetyl-alpha-D-glucosamine contacts are provided by residues Leu8 to Gly11, Lys22, Gln73, Gly78 to Thr79, Tyr100 to Asp102, Gly138, Glu153, Asn168, and Asn226. Mg(2+) is bound at residue Asp102. Asn226 contributes to the Mg(2+) binding site. A linker region spans residues Ser229–Gln249. Residues Gly250–Asn454 are N-acetyltransferase. 2 residues coordinate UDP-N-acetyl-alpha-D-glucosamine: Arg332 and Lys350. The active-site Proton acceptor is His362. UDP-N-acetyl-alpha-D-glucosamine contacts are provided by Tyr365 and Asn376. Acetyl-CoA-binding positions include Ala379, Asn385 to Tyr386, Ser404, Ala422, and Arg439.

This sequence in the N-terminal section; belongs to the N-acetylglucosamine-1-phosphate uridyltransferase family. The protein in the C-terminal section; belongs to the transferase hexapeptide repeat family. As to quaternary structure, homotrimer. It depends on Mg(2+) as a cofactor.

It localises to the cytoplasm. The enzyme catalyses alpha-D-glucosamine 1-phosphate + acetyl-CoA = N-acetyl-alpha-D-glucosamine 1-phosphate + CoA + H(+). The catalysed reaction is N-acetyl-alpha-D-glucosamine 1-phosphate + UTP + H(+) = UDP-N-acetyl-alpha-D-glucosamine + diphosphate. Its pathway is nucleotide-sugar biosynthesis; UDP-N-acetyl-alpha-D-glucosamine biosynthesis; N-acetyl-alpha-D-glucosamine 1-phosphate from alpha-D-glucosamine 6-phosphate (route II): step 2/2. It functions in the pathway nucleotide-sugar biosynthesis; UDP-N-acetyl-alpha-D-glucosamine biosynthesis; UDP-N-acetyl-alpha-D-glucosamine from N-acetyl-alpha-D-glucosamine 1-phosphate: step 1/1. It participates in bacterial outer membrane biogenesis; LPS lipid A biosynthesis. Functionally, catalyzes the last two sequential reactions in the de novo biosynthetic pathway for UDP-N-acetylglucosamine (UDP-GlcNAc). The C-terminal domain catalyzes the transfer of acetyl group from acetyl coenzyme A to glucosamine-1-phosphate (GlcN-1-P) to produce N-acetylglucosamine-1-phosphate (GlcNAc-1-P), which is converted into UDP-GlcNAc by the transfer of uridine 5-monophosphate (from uridine 5-triphosphate), a reaction catalyzed by the N-terminal domain. This Hydrogenovibrio crunogenus (strain DSM 25203 / XCL-2) (Thiomicrospira crunogena) protein is Bifunctional protein GlmU.